Here is a 488-residue protein sequence, read N- to C-terminus: Secreted triacylglycerol lipase LIP1 (488 aa).

Positions 1–26 (MPSMLSLFYLAQSLFLLLLFPLYGHA) are cleaved as a signal peptide. C119 and C288 are joined by a disulfide. An N-linked (GlcNAc...) asparagine glycan is attached at N183. Residue S201 is the Nucleophile of the active site. Residue N316 is glycosylated (N-linked (GlcNAc...) asparagine). Residues D348 and H382 contribute to the active site. Residues 461-488 (SKSGSSLKSHSHSQTHKHRKDVSTISNA) are disordered. Positions 469 to 480 (SHSHSQTHKHRK) are enriched in basic residues.

This sequence belongs to the AB hydrolase superfamily. Lipase family. Class Lip subfamily.

The protein localises to the secreted. The enzyme catalyses a triacylglycerol + H2O = a diacylglycerol + a fatty acid + H(+). It catalyses the reaction a monoacylglycerol + H2O = glycerol + a fatty acid + H(+). The catalysed reaction is a diacylglycerol + H2O = a monoacylglycerol + a fatty acid + H(+). Its activity is regulated as follows. Inhibited by different metal ions including Fe(2+), Fe(3+), Cu(2+), and Zn(2+). The monovalent ions Na(+) and K(+) exhibit less dramatic inhibition. Secreted lipase that releases free fatty acids from monoacylglycerol and triacylglycerol but has no phospholipase or lysophospholipase activities. Has minor esterase activity. Due to an absence of fatty acid synthase genes in Malassezia species, secretory lipases are essential for the yeast to generate free fatty acids from degradation of sebum and assimilate them as lipid sources for growth. Plays important roles not only in lipid metabolism but also in the immune response of host cells and pathogenesis. Hydrolyzes lipids, such as Tween 20, 40 and 80, with Tween 80 being the best substrate. The protein is Secreted triacylglycerol lipase LIP1 of Malassezia furfur (Pityriasis versicolor infection agent).